We begin with the raw amino-acid sequence, 123 residues long: Ribosome-binding factor A (123 aa).

This sequence belongs to the RbfA family. In terms of assembly, monomer. Binds 30S ribosomal subunits, but not 50S ribosomal subunits or 70S ribosomes.

The protein resides in the cytoplasm. In terms of biological role, one of several proteins that assist in the late maturation steps of the functional core of the 30S ribosomal subunit. Associates with free 30S ribosomal subunits (but not with 30S subunits that are part of 70S ribosomes or polysomes). Required for efficient processing of 16S rRNA. May interact with the 5'-terminal helix region of 16S rRNA. This is Ribosome-binding factor A from Prochlorococcus marinus (strain NATL1A).